Reading from the N-terminus, the 53-residue chain is Cytochrome c-552 (53 aa).

Heme c contacts are provided by C19, C22, H23, and M44.

Binds 1 heme c group covalently per subunit.

The protein localises to the cell membrane. The polypeptide is Cytochrome c-552 (Schinkia azotoformans (Bacillus azotoformans)).